Consider the following 369-residue polypeptide: MTDLTQLQAGLIGRIEAAADVAALEAIRVEALGKSGSISEMLKGLGKMSPDERREQGPKINGLRDAVATAIAEKKAALEAAELDRKLAAERVDLTLPPPPERRGRVHPTMQVLDEMIAVFAEMGFGLAEGPDIEDDFHNFTALNFPPKHPAREMHDTFWLPQNEAGERKLLRTHTSPVQVRVMRGTNEKLPAWIANGQAPPIRVIVPGRVYRSDSDATHTPMFHQLEGLVIDRNIHMGHLKWTLETFTRRFFEAEGVVTRFRPHHFPFTEPSCEMDVQCDRSGGSVKIGQGSDWLEILGGGMVHPNVLRNCGLDPDEWQGFAFGLGVDRLGMLKYGMPDLRDMFGSDVRWLEHWGFSAFQAPNPATGLS.

Mg(2+) is bound at residue glutamate 270.

It belongs to the class-II aminoacyl-tRNA synthetase family. Phe-tRNA synthetase alpha subunit type 1 subfamily. In terms of assembly, tetramer of two alpha and two beta subunits. Mg(2+) is required as a cofactor.

It is found in the cytoplasm. It carries out the reaction tRNA(Phe) + L-phenylalanine + ATP = L-phenylalanyl-tRNA(Phe) + AMP + diphosphate + H(+). In Phenylobacterium zucineum (strain HLK1), this protein is Phenylalanine--tRNA ligase alpha subunit.